The primary structure comprises 123 residues: Probable prefoldin subunit 4 (123 aa).

This sequence belongs to the prefoldin subunit beta family. Heterohexamer of two PFD-alpha type and four PFD-beta type subunits.

In terms of biological role, binds specifically to cytosolic chaperonin (c-CPN) and transfers target proteins to it. Binds to nascent polypeptide chain and promotes folding in an environment in which there are many competing pathways for nonnative proteins. In Schizosaccharomyces pombe (strain 972 / ATCC 24843) (Fission yeast), this protein is Probable prefoldin subunit 4.